Reading from the N-terminus, the 702-residue chain is Glucoamylase (702 aa).

Residues 1 to 21 (MSRKLIKYLPLLVLASSVLSG) form the signal peptide. C22 carries the N-palmitoyl cysteine lipid modification. C22 is lipidated: S-diacylglycerol cysteine. W342 serves as a coordination point for substrate. The active-site Proton acceptor is the E452. Catalysis depends on E455, which acts as the Proton donor.

It belongs to the glycosyl hydrolase 15 family.

The protein resides in the cell membrane. The enzyme catalyses Hydrolysis of terminal (1-&gt;4)-linked alpha-D-glucose residues successively from non-reducing ends of the chains with release of beta-D-glucose.. Its function is as follows. CGA has typical kinetic properties for a glucoamylase, but this bacterial enzyme had higher isomaltose-hydrolyzing activity than other eukaryotic glucoamylases. In Clostridium sp. (strain G0005), this protein is Glucoamylase (cga).